Here is a 255-residue protein sequence, read N- to C-terminus: Probable transcriptional regulatory protein Rcas_0718 (255 aa).

Belongs to the TACO1 family.

Its subcellular location is the cytoplasm. The protein is Probable transcriptional regulatory protein Rcas_0718 of Roseiflexus castenholzii (strain DSM 13941 / HLO8).